The following is a 115-amino-acid chain: NADH-ubiquinone oxidoreductase chain 3 (115 aa).

The next 3 membrane-spanning stretches (helical) occupy residues 3–23 (LALA…ITFW), 55–75 (FFLV…LLPL), and 86–106 (LTIA…AYEW).

This sequence belongs to the complex I subunit 3 family. As to quaternary structure, core subunit of respiratory chain NADH dehydrogenase (Complex I) which is composed of 45 different subunits. Interacts with TMEM186. Interacts with TMEM242.

It localises to the mitochondrion inner membrane. The catalysed reaction is a ubiquinone + NADH + 5 H(+)(in) = a ubiquinol + NAD(+) + 4 H(+)(out). Core subunit of the mitochondrial membrane respiratory chain NADH dehydrogenase (Complex I) which catalyzes electron transfer from NADH through the respiratory chain, using ubiquinone as an electron acceptor. Essential for the catalytic activity of complex I. In Hylobates lar (Lar gibbon), this protein is NADH-ubiquinone oxidoreductase chain 3.